A 457-amino-acid chain; its full sequence is tRNA-2-methylthio-N(6)-dimethylallyladenosine synthase (457 aa).

Residues Arg-19–His-134 enclose the MTTase N-terminal domain. Cys-28, Cys-64, Cys-98, Cys-172, Cys-176, and Cys-179 together coordinate [4Fe-4S] cluster. The Radical SAM core domain occupies Pro-158–Glu-390. A TRAM domain is found at Leu-393–Glu-456.

Belongs to the methylthiotransferase family. MiaB subfamily. In terms of assembly, monomer. Requires [4Fe-4S] cluster as cofactor.

Its subcellular location is the cytoplasm. It carries out the reaction N(6)-dimethylallyladenosine(37) in tRNA + (sulfur carrier)-SH + AH2 + 2 S-adenosyl-L-methionine = 2-methylsulfanyl-N(6)-dimethylallyladenosine(37) in tRNA + (sulfur carrier)-H + 5'-deoxyadenosine + L-methionine + A + S-adenosyl-L-homocysteine + 2 H(+). Its function is as follows. Catalyzes the methylthiolation of N6-(dimethylallyl)adenosine (i(6)A), leading to the formation of 2-methylthio-N6-(dimethylallyl)adenosine (ms(2)i(6)A) at position 37 in tRNAs that read codons beginning with uridine. This chain is tRNA-2-methylthio-N(6)-dimethylallyladenosine synthase, found in Parabacteroides distasonis (strain ATCC 8503 / DSM 20701 / CIP 104284 / JCM 5825 / NCTC 11152).